Reading from the N-terminus, the 277-residue chain is Putative envelope-preserving system protein Rv2742c (277 aa).

The span at 31–54 (RDENRQRHAQVDVQRRRDQPERGQ) shows a compositional bias: basic and acidic residues. 3 disordered regions span residues 31–70 (RDEN…PDGR), 113–133 (QGSP…RLGR), and 180–210 (RQGS…HTAD). Over residues 116–133 (PRRRERRRGQTAHQRLGR) the composition is skewed to basic residues.

In terms of assembly, interacts with Rv2743c.

Its function is as follows. Involved in preservation of envelope integrity and tolerance to surface stress. Reverses the inhibitory effect of PspA on ClgR activity. Facilitates intracellular growth of M.tuberculosis. This Mycobacterium tuberculosis (strain ATCC 25618 / H37Rv) protein is Putative envelope-preserving system protein Rv2742c.